Here is a 357-residue protein sequence, read N- to C-terminus: Putative DNA directed RNA polymerase subunit R470 (357 aa).

This sequence belongs to the archaeal Rpo11/eukaryotic RPB11/RPC19 RNA polymerase subunit family.

The protein resides in the virion. It carries out the reaction RNA(n) + a ribonucleoside 5'-triphosphate = RNA(n+1) + diphosphate. This is Putative DNA directed RNA polymerase subunit R470 from Acanthamoeba polyphaga mimivirus (APMV).